A 195-amino-acid polypeptide reads, in one-letter code: Small t antigen (195 aa).

The residue at position 1 (M1) is an N-acetylmethionine; by host. The J domain occupies 12-75 (RLLELLKLPR…VYNLRMNLGG (64 aa)).

Interacts with host PPP2R1A; the interaction inhibits PP2A activity.

The protein resides in the host cytoplasm. The protein localises to the host nucleus. Its function is as follows. Promotes efficient viral genome replication by accelerating both G1 and S phase progression of the cell cycle. Inhibits host PP2A by binding to the A subunit, thereby displacing lower affinity regulatory B subunit. Inactivation of PP2A in turn results in the transactivation of cyclin A and cyclin D1 promoters. Late during the infection cycle, ST may induce dephosphorylation of host MTOR, leading to the inhibition of cap-dependent translation. May establish and maintain high levels of viral genomes during persistent infection in cell culture. This is Small t antigen from Mus musculus (Mouse).